The primary structure comprises 790 residues: Pentatricopeptide repeat-containing protein At1g25360 (790 aa).

PPR repeat units follow at residues 48 to 82 (RAHI…DKIA), 84 to 109 (TTMV…APVC), 112 to 146 (DTVM…GFKP), 147 to 182 (DNFT…GAGY), 183 to 217 (ITSV…ILEK), 218 to 248 (DERS…MDDN), 250 to 284 (KLVA…GIEL), 285 to 315 (DEFT…VLRR), 319 to 349 (SFHF…MPAK), 350 to 384 (DLVS…NILS), 385 to 415 (WMIM…GFEP), 416 to 450 (CDYA…GFDS), 451 to 481 (SLSA…MPCL), 482 to 516 (DSVS…GIRP), 517 to 551 (DRIT…YRIP), and 553 to 583 (GADH…LPFK). The type E motif stretch occupies residues 588–663 (IWEALLSGCR…EVACSWIEME (76 aa)). The type E(+) motif stretch occupies residues 664–694 (TQVHTFLVDDTSHPEAEAVYIYLQDLGKEMR). Positions 695-790 (RLGYVPDTSF…NGECSCGNFW (96 aa)) are type DYW motif.

It belongs to the PPR family. PCMP-H subfamily.

This is Pentatricopeptide repeat-containing protein At1g25360 (PCMP-H74) from Arabidopsis thaliana (Mouse-ear cress).